Reading from the N-terminus, the 60-residue chain is Protein CADMIUM TOLERANCE 4 (60 aa).

Residues 26 to 42 traverse the membrane as a helical segment; the sequence is GFLYACLFMLCCCFCCY.

This sequence belongs to the CYSTM1 family. As to expression, mainly expressed in shoots, and, to a lower extent, in roots.

The protein resides in the cell membrane. Its subcellular location is the secreted. It is found in the cell wall. Functionally, confers resistance to heavy metal ions (e.g. aluminium (Al)) by chelating them at the plasma membrane of root cells, thus stopping their entry and reducing their accumulation. This chain is Protein CADMIUM TOLERANCE 4, found in Oryza sativa subsp. japonica (Rice).